We begin with the raw amino-acid sequence, 375 residues long: 1-deoxy-D-xylulose 5-phosphate reductoisomerase (375 aa).

T12, G13, S14, I15, N39, and N115 together coordinate NADPH. K116 lines the 1-deoxy-D-xylulose 5-phosphate pocket. E117 lines the NADPH pocket. A Mn(2+)-binding site is contributed by D141. 4 residues coordinate 1-deoxy-D-xylulose 5-phosphate: S142, E143, S163, and H186. E143 is a binding site for Mn(2+). G192 provides a ligand contact to NADPH. S199, N204, K205, and E208 together coordinate 1-deoxy-D-xylulose 5-phosphate. E208 is a binding site for Mn(2+).

It belongs to the DXR family. Mg(2+) is required as a cofactor. It depends on Mn(2+) as a cofactor.

The enzyme catalyses 2-C-methyl-D-erythritol 4-phosphate + NADP(+) = 1-deoxy-D-xylulose 5-phosphate + NADPH + H(+). Its pathway is isoprenoid biosynthesis; isopentenyl diphosphate biosynthesis via DXP pathway; isopentenyl diphosphate from 1-deoxy-D-xylulose 5-phosphate: step 1/6. Functionally, catalyzes the NADPH-dependent rearrangement and reduction of 1-deoxy-D-xylulose-5-phosphate (DXP) to 2-C-methyl-D-erythritol 4-phosphate (MEP). This is 1-deoxy-D-xylulose 5-phosphate reductoisomerase from Thermotoga neapolitana (strain ATCC 49049 / DSM 4359 / NBRC 107923 / NS-E).